The sequence spans 38 residues: Large ribosomal subunit protein bL36 (38 aa).

It belongs to the bacterial ribosomal protein bL36 family.

This Chlorobaculum parvum (strain DSM 263 / NCIMB 8327) (Chlorobium vibrioforme subsp. thiosulfatophilum) protein is Large ribosomal subunit protein bL36.